A 90-amino-acid chain; its full sequence is Small ribosomal subunit protein bS16 (90 aa).

The protein belongs to the bacterial ribosomal protein bS16 family.

The sequence is that of Small ribosomal subunit protein bS16 from Bacillus licheniformis (strain ATCC 14580 / DSM 13 / JCM 2505 / CCUG 7422 / NBRC 12200 / NCIMB 9375 / NCTC 10341 / NRRL NRS-1264 / Gibson 46).